Reading from the N-terminus, the 582-residue chain is MNSKQITTLWCAVIVEELIRQEAGFFCISPGSRSTPLTLAVASNPKARFRMFPDERSAGFYALGYARATGMPAVLVCTSGTAVANYFPAVVEASADAQPMLVLSADRPFELLECGANQAIRQQNIFGSYTRWSFELPEPGIATPLASLLSTVDHAVRKSLSLPAGPVHLNLPFREPLEPEAPDPGHPWAAPLETWQASGEPWSRFARPLHEPSAESIVTLRELLAQAERPLFVAGSMSNAADGEAVAALAESLGVPLFADLTSGIRLSSDCTPWQLAFQNEAFVERFQPDVVIHFGGHVIGKQPAMALRKQPPLHYVVVREHPGRFDPDHNVTLTLEASPAAVASALEGCREPVPGIRCRDAFSAASGIIDKMACVPELAVSEISAPRIVSSLAGDGHALFVANSMPARDMDLYAAPVAQKPLQVALNRGVSGIDGIISTAAGFSAGLGKPTTLLIGDISFLHDLNALCLLNHPWNPLIVIVLNNHGGSIFSFLPIASQTDRLDECFATPQNFSIESAARTFGIDYACPETNGDFTQLYAEALTTKKSLIIEIRSDREKNLLLHRSLKARLDPVFEKADCSR.

Belongs to the TPP enzyme family. MenD subfamily. In terms of assembly, homodimer. It depends on Mg(2+) as a cofactor. Mn(2+) is required as a cofactor. Thiamine diphosphate serves as cofactor.

It catalyses the reaction isochorismate + 2-oxoglutarate + H(+) = 5-enolpyruvoyl-6-hydroxy-2-succinyl-cyclohex-3-ene-1-carboxylate + CO2. It functions in the pathway quinol/quinone metabolism; 1,4-dihydroxy-2-naphthoate biosynthesis; 1,4-dihydroxy-2-naphthoate from chorismate: step 2/7. The protein operates within quinol/quinone metabolism; menaquinone biosynthesis. Functionally, catalyzes the thiamine diphosphate-dependent decarboxylation of 2-oxoglutarate and the subsequent addition of the resulting succinic semialdehyde-thiamine pyrophosphate anion to isochorismate to yield 2-succinyl-5-enolpyruvyl-6-hydroxy-3-cyclohexene-1-carboxylate (SEPHCHC). The chain is 2-succinyl-5-enolpyruvyl-6-hydroxy-3-cyclohexene-1-carboxylate synthase from Chlorobaculum tepidum (strain ATCC 49652 / DSM 12025 / NBRC 103806 / TLS) (Chlorobium tepidum).